We begin with the raw amino-acid sequence, 555 residues long: F-box protein COS111 (555 aa).

2 disordered regions span residues 31–82 (MSVS…SVSN) and 124–147 (DHSI…KQHH). A compositionally biased stretch (low complexity) spans 32 to 42 (SVSSRSSQEES). Residues 48–61 (ESVSSLSMQEQQTE) show a composition bias toward polar residues. Low complexity predominate over residues 129-142 (SGVTRSTVSTVRPT). In terms of domain architecture, F-box spans 196-246 (HKDLNSLPHEIMSKIVSHLDQRDVTMCLYVNKNMYSTAVRQLYKEPFFSST). Low complexity predominate over residues 327 to 346 (SSSSLSCSRTSSNSNSSTES). Residues 327–354 (SSSSLSCSRTSSNSNSSTESKPVKKRRS) form a disordered region.

In terms of biological role, F-box protein probably involved in ubiquitin conjugation pathway. This Yarrowia lipolytica (strain CLIB 122 / E 150) (Yeast) protein is F-box protein COS111 (COS111).